A 215-amino-acid polypeptide reads, in one-letter code: Pyridoxine/pyridoxamine 5'-phosphate oxidase (215 aa).

Residues 9-12 and Lys-69 contribute to the substrate site; that span reads RRDY. FMN is bound by residues 64–69, 79–80, Lys-86, and Gln-108; these read RVLLLK and FT. The substrate site is built by Tyr-126, Arg-130, and Ser-134. FMN contacts are provided by residues 143–144 and Trp-188; that span reads QS. Substrate is bound at residue 194 to 196; the sequence is RLH. Residue Arg-198 coordinates FMN.

It belongs to the pyridoxamine 5'-phosphate oxidase family. In terms of assembly, homodimer. The cofactor is FMN.

It carries out the reaction pyridoxamine 5'-phosphate + O2 + H2O = pyridoxal 5'-phosphate + H2O2 + NH4(+). The catalysed reaction is pyridoxine 5'-phosphate + O2 = pyridoxal 5'-phosphate + H2O2. Its pathway is cofactor metabolism; pyridoxal 5'-phosphate salvage; pyridoxal 5'-phosphate from pyridoxamine 5'-phosphate: step 1/1. It functions in the pathway cofactor metabolism; pyridoxal 5'-phosphate salvage; pyridoxal 5'-phosphate from pyridoxine 5'-phosphate: step 1/1. In terms of biological role, catalyzes the oxidation of either pyridoxine 5'-phosphate (PNP) or pyridoxamine 5'-phosphate (PMP) into pyridoxal 5'-phosphate (PLP). This chain is Pyridoxine/pyridoxamine 5'-phosphate oxidase, found in Pseudomonas putida (strain W619).